The sequence spans 343 residues: Fructose-1,6-bisphosphatase class 1 (343 aa).

Mg(2+) contacts are provided by Glu-91, Asp-113, Ile-115, and Asp-116. Substrate contacts are provided by residues 116–119 (DGSS), Asn-210, and Lys-276. Position 282 (Glu-282) interacts with Mg(2+).

The protein belongs to the FBPase class 1 family. In terms of assembly, homotetramer. It depends on Mg(2+) as a cofactor.

It localises to the cytoplasm. It carries out the reaction beta-D-fructose 1,6-bisphosphate + H2O = beta-D-fructose 6-phosphate + phosphate. It participates in carbohydrate biosynthesis; gluconeogenesis. The protein is Fructose-1,6-bisphosphatase class 1 of Parvibaculum lavamentivorans (strain DS-1 / DSM 13023 / NCIMB 13966).